A 348-amino-acid chain; its full sequence is Peptide-N(4)-(N-acetyl-beta-glucosaminyl)asparagine amidase (348 aa).

Zn(2+) contacts are provided by C116, C119, C151, and C154. C177 acts as the Nucleophile in catalysis. Residues H204 and D221 contribute to the active site. E224 contributes to the substrate binding site. Residues 311-348 (PSATPTKEMQKLKISKTGNKGRISGSAEWKESRGENGK) are disordered. Residues 338-348 (EWKESRGENGK) are compositionally biased toward basic and acidic residues.

Belongs to the transglutaminase-like superfamily. PNGase family. The cofactor is Zn(2+).

It is found in the cytoplasm. The catalysed reaction is Hydrolysis of an N(4)-(acetyl-beta-D-glucosaminyl)asparagine residue in which the glucosamine residue may be further glycosylated, to yield a (substituted) N-acetyl-beta-D-glucosaminylamine and a peptide containing an aspartate residue.. Its function is as follows. Specifically deglycosylates the denatured form of N-linked glycoproteins in the cytoplasm and assists their proteasome-mediated degradation. Cleaves the beta-aspartyl-glucosamine (GlcNAc) of the glycan and the amide side chain of Asn, converting Asn to Asp. Prefers proteins containing high-mannose over those bearing complex type oligosaccharides. Can recognize misfolded proteins in the endoplasmic reticulum that are exported to the cytosol to be destroyed and deglycosylate them, while it has no activity toward native proteins. Deglycosylation is a prerequisite for subsequent proteasome-mediated degradation of some, but not all, misfolded glycoproteins. The polypeptide is Peptide-N(4)-(N-acetyl-beta-glucosaminyl)asparagine amidase (PNG1) (Candida glabrata (strain ATCC 2001 / BCRC 20586 / JCM 3761 / NBRC 0622 / NRRL Y-65 / CBS 138) (Yeast)).